We begin with the raw amino-acid sequence, 427 residues long: Adenylosuccinate synthetase (427 aa).

GTP-binding positions include 12-18 and 40-42; these read GDEGKGK and GHT. Catalysis depends on Asp-13, which acts as the Proton acceptor. Mg(2+) contacts are provided by Asp-13 and Gly-40. IMP contacts are provided by residues 13–16, 38–41, Thr-128, Arg-142, Gln-223, Thr-238, and Arg-302; these read DEGK and NAGH. His-41 serves as the catalytic Proton donor. 298–304 lines the substrate pocket; the sequence is TTTGRAR. Residues Arg-304, 330-332, and 412-414 each bind GTP; these read KLD and AVG.

Belongs to the adenylosuccinate synthetase family. In terms of assembly, homodimer. The cofactor is Mg(2+).

It localises to the cytoplasm. The catalysed reaction is IMP + L-aspartate + GTP = N(6)-(1,2-dicarboxyethyl)-AMP + GDP + phosphate + 2 H(+). Its pathway is purine metabolism; AMP biosynthesis via de novo pathway; AMP from IMP: step 1/2. Its function is as follows. Plays an important role in the de novo pathway of purine nucleotide biosynthesis. Catalyzes the first committed step in the biosynthesis of AMP from IMP. In Desulfitobacterium hafniense (strain Y51), this protein is Adenylosuccinate synthetase.